Here is a 328-residue protein sequence, read N- to C-terminus: Probable GDP-L-fucose synthase 1 (328 aa).

25 to 31 (GHRGLVG) serves as a coordination point for NADP(+). The Proton donor/acceptor role is filled by Tyr-152. NADP(+)-binding positions include Lys-156, 179-182 (PTNL), and His-195. Residues Arg-203, Trp-218, Arg-225, and Asp-285 each coordinate substrate.

This sequence belongs to the NAD(P)-dependent epimerase/dehydratase family. Fucose synthase subfamily. As to quaternary structure, homodimer.

The enzyme catalyses GDP-beta-L-fucose + NADP(+) = GDP-4-dehydro-alpha-D-rhamnose + NADPH + H(+). Its pathway is nucleotide-sugar biosynthesis; GDP-L-fucose biosynthesis via de novo pathway; GDP-L-fucose from GDP-alpha-D-mannose: step 2/2. In terms of biological role, catalyzes the two-step NADP-dependent conversion of GDP-4-dehydro-6-deoxy-D-mannose to GDP-fucose, involving an epimerase and a reductase reaction. In Oryza sativa subsp. japonica (Rice), this protein is Probable GDP-L-fucose synthase 1.